The following is a 429-amino-acid chain: MTSVVVVGTQWGDEGKGKITDFLSADAEVIARYQGGDNAGHTIVIDGKKFKLHLIPSGIFFPEKVSVIGNGMVVNPKSLVEELDYLHQEGVATDNLRISDRAHIILPYHIKLDQLQEASKGDNKIGTTNKGIGPAYMDKAARVGIRIADLLDKDIFAERLKANLAEKNRLFEKMYESSPVAFDTIFDEYYAYGQKIKDYVTDTSVILNKALDKGRRVLFEGAQGVMLDIDQGTYPFVTSSNPVAGGVTIGSGVGPSKINKVVGVCKAYTSRVGDGPFPTELFDQTGERIREVGHEYGTTTGRPRRVGWFDSVVMRHSRRVSGITNLSLNCIDVLSGLDIVKICVAYDLDGKRIDHYPASLEQLKRCKPIYEELPGWSEDITGVRSLEDLPENARNYVRRVSELVGVRISTFSVGPDRDQTNILESVWGL.

Residues 12–18 (GDEGKGK) and 40–42 (GHT) contribute to the GTP site. The active-site Proton acceptor is Asp13. Mg(2+) is bound by residues Asp13 and Gly40. IMP is bound by residues 13–16 (DEGK), 38–41 (NAGH), Thr128, Arg142, Gln223, Thr238, and Arg302. His41 functions as the Proton donor in the catalytic mechanism. 298–304 (TTTGRPR) provides a ligand contact to substrate. GTP contacts are provided by residues Arg304, 330 to 332 (CID), and 412 to 414 (SVG).

It belongs to the adenylosuccinate synthetase family. As to quaternary structure, homodimer. It depends on Mg(2+) as a cofactor.

Its subcellular location is the cytoplasm. It carries out the reaction IMP + L-aspartate + GTP = N(6)-(1,2-dicarboxyethyl)-AMP + GDP + phosphate + 2 H(+). The protein operates within purine metabolism; AMP biosynthesis via de novo pathway; AMP from IMP: step 1/2. In terms of biological role, plays an important role in the de novo pathway of purine nucleotide biosynthesis. Catalyzes the first committed step in the biosynthesis of AMP from IMP. This is Adenylosuccinate synthetase from Streptococcus mutans serotype c (strain ATCC 700610 / UA159).